Here is a 144-residue protein sequence, read N- to C-terminus: Large ribosomal subunit protein uL13 (144 aa).

The protein belongs to the universal ribosomal protein uL13 family. Part of the 50S ribosomal subunit.

In terms of biological role, this protein is one of the early assembly proteins of the 50S ribosomal subunit, although it is not seen to bind rRNA by itself. It is important during the early stages of 50S assembly. In Mycoplasma mobile (strain ATCC 43663 / 163K / NCTC 11711) (Mesomycoplasma mobile), this protein is Large ribosomal subunit protein uL13.